Consider the following 487-residue polypeptide: Polyamine oxidase 4 (487 aa).

FAD contacts are provided by glutamate 53, arginine 61, valine 242, and glutamate 429. The short motif at 485 to 487 is the Microbody targeting signal element; sequence CRT.

The protein belongs to the flavin monoamine oxidase family. Requires FAD as cofactor. As to expression, widely expressed.

The protein localises to the peroxisome. The catalysed reaction is spermine + O2 + H2O = 3-aminopropanal + spermidine + H2O2. It carries out the reaction norspermine + O2 + H2O = norspermidine + 3-aminopropanal + H2O2. The enzyme catalyses thermospermine + O2 + H2O = 3-aminopropanal + spermidine + H2O2. It functions in the pathway amine and polyamine degradation; spermine degradation. Its function is as follows. Flavoenzyme involved in polyamine back-conversion. Catalyzes the oxidation of the secondary amino group of polyamines, such as spermine. Substrate preference is spermine &gt; thermospermine &gt; norspermine. No activity detected when putrescine, spermidine or N(1)-acetylspermidine are used as substrates. Plays an important role in the regulation of polyamine intracellular concentration. The polypeptide is Polyamine oxidase 4 (Oryza sativa subsp. japonica (Rice)).